The following is a 560-amino-acid chain: MMEPPQTRLMINVFIVSFLALLVNLVVGVLGADNYSRDDFPLDFVFGSGTSAYQVEGAANKDGRTPSIWDTFAYAGYAHGENGDVACDGYHKYKEDVQLMLETGLDAYRFSISWSRLLPNGRGPVNPKGLQYSNNLINELISNGIQPHATLYNFDLPQVLEDEYGGWISRDIIRDFTYYAEVEFREFGDRVLYWTTVNEPNVFALGGYDQGNSPPRRCSPPFCATNDTMGNSTYEPYLAVHHILLSHSSAARLYWRKYRDKQHGFVGISIYTFGIFPQTNTEKDRVASQRARDFFVGWIMEPLQYGDYPISMKTNAGERIPAFTNHESKQVKGSFDFIGVIHYTNLNVSDNSDALKNQLRDFTADMAANIFGEDLFSNEEYLITPWGLRQELNKFKLLYGNPPIFIHENGQRTASNSSLQDVDKGEILHGYIGSVLDALRDASNIKGYFRMAFPGFVRVARWIQVSFGLYYVDRDDPQLKKIPKLFCKNGTTGFLKGRRTSILDLFELEQDPITCSKSPIIFSKISKWVLASLLFLIQHKIKFMWREPLPGQIPLKLVMF.

An N-terminal signal peptide occupies residues 1–31 (MMEPPQTRLMINVFIVSFLALLVNLVVGVLG). The Peroxisomal portion of the chain corresponds to 32–517 (ADNYSRDDFP…LEQDPITCSK (486 aa)). Residue Asn34 is glycosylated (N-linked (GlcNAc...) asparagine). Residues Gln54 and 198–199 (NE) each bind a beta-D-glucoside. Glu199 functions as the Proton donor in the catalytic mechanism. A disulfide bridge connects residues Cys218 and Cys223. Asn226 and Asn231 each carry an N-linked (GlcNAc...) asparagine glycan. Tyr343 is a binding site for a beta-D-glucoside. Residue Asn347 is glycosylated (N-linked (GlcNAc...) asparagine). Glu408 serves as a coordination point for a beta-D-glucoside. Residue Glu408 is the Nucleophile of the active site. N-linked (GlcNAc...) asparagine glycosylation is present at Asn416. Residue Phe467 participates in a beta-D-glucoside binding. A glycan (N-linked (GlcNAc...) asparagine) is linked at Asn489. Residues 518 to 538 (SPIIFSKISKWVLASLLFLIQ) traverse the membrane as a helical segment. At 539 to 560 (HKIKFMWREPLPGQIPLKLVMF) the chain is on the cytoplasmic side.

The protein belongs to the glycosyl hydrolase 1 family. As to quaternary structure, monomer. As to expression, highly expressed in uninfected root nodules. Detected in leaves, stems and roots.

The protein localises to the peroxisome membrane. It catalyses the reaction 5-hydroxyisourate + H2O = 5-hydroxy-2-oxo-4-ureido-2,5-dihydro-1H-imidazole-5-carboxylate + H(+). It participates in purine metabolism; urate degradation; (S)-allantoin from urate: step 2/3. In terms of biological role, involved in the conversion of hydroxyisourate to ureides such as allantoin, the major form of nitrogen transport in legumes. The polypeptide is Hydroxyisourate hydrolase (HIUH) (Glycine max (Soybean)).